A 491-amino-acid polypeptide reads, in one-letter code: UDP-N-acetylmuramoyl-L-alanyl-D-glutamate--2,6-diaminopimelate ligase (491 aa).

Serine 30 serves as a coordination point for UDP-N-acetyl-alpha-D-muramoyl-L-alanyl-D-glutamate. ATP is bound at residue 108–114 (GTNGKTT). Residues asparagine 149, 150–151 (TT), serine 177, glutamine 183, and arginine 185 each bind UDP-N-acetyl-alpha-D-muramoyl-L-alanyl-D-glutamate. Position 217 is an N6-carboxylysine (lysine 217). Meso-2,6-diaminopimelate contacts are provided by residues arginine 383, 407–410 (DNPR), glycine 458, and glutamate 462. A Meso-diaminopimelate recognition motif motif is present at residues 407-410 (DNPR).

Belongs to the MurCDEF family. MurE subfamily. It depends on Mg(2+) as a cofactor. In terms of processing, carboxylation is probably crucial for Mg(2+) binding and, consequently, for the gamma-phosphate positioning of ATP.

The protein localises to the cytoplasm. The enzyme catalyses UDP-N-acetyl-alpha-D-muramoyl-L-alanyl-D-glutamate + meso-2,6-diaminopimelate + ATP = UDP-N-acetyl-alpha-D-muramoyl-L-alanyl-gamma-D-glutamyl-meso-2,6-diaminopimelate + ADP + phosphate + H(+). The protein operates within cell wall biogenesis; peptidoglycan biosynthesis. Its function is as follows. Catalyzes the addition of meso-diaminopimelic acid to the nucleotide precursor UDP-N-acetylmuramoyl-L-alanyl-D-glutamate (UMAG) in the biosynthesis of bacterial cell-wall peptidoglycan. The polypeptide is UDP-N-acetylmuramoyl-L-alanyl-D-glutamate--2,6-diaminopimelate ligase (Listeria monocytogenes serovar 1/2a (strain ATCC BAA-679 / EGD-e)).